We begin with the raw amino-acid sequence, 294 residues long: MAWVQIRLNSTDREAEKISDFLEDIGAVSVTFMNSQDTPIFEPLPGETRLWGNTDVVALFDAETDMKEIVSTLVKSKLVATDFPYKIEQIEDKDWEREWMDNFHPMQFGKRLWICPSWREIPDPNAVNVMLDPGLAFGTGTHPTTALCLTWLDSLDLTDKTVIDFGCGSGILAIAALKLGAKKAIGIDIDPQAILASQNNAEVNGVADRLQLFLTKDQPQNLIADVVIANILAGPLKELAPQIITLVKPQGNLGLSGILATQAESVCKAYQNSFKLDSIIEKEEWCRITGIKKH.

Residues Thr145, Gly166, Asp188, and Asn230 each coordinate S-adenosyl-L-methionine.

It belongs to the methyltransferase superfamily. PrmA family.

It localises to the cytoplasm. The enzyme catalyses L-lysyl-[protein] + 3 S-adenosyl-L-methionine = N(6),N(6),N(6)-trimethyl-L-lysyl-[protein] + 3 S-adenosyl-L-homocysteine + 3 H(+). Functionally, methylates ribosomal protein L11. This is Ribosomal protein L11 methyltransferase from Glaesserella parasuis serovar 5 (strain SH0165) (Haemophilus parasuis).